Reading from the N-terminus, the 496-residue chain is Fibronectin type III and SPRY domain-containing protein 1 (496 aa).

Residues glutamine 4–glutamate 99 are a coiled coil. The COS domain maps to leucine 105–leucine 162. Positions valine 164–phenylalanine 268 constitute a Fibronectin type-III domain. The region spanning tryptophan 290–alanine 477 is the B30.2/SPRY domain. A disordered region spans residues lysine 301 to aspartate 336. Omega-N-methylarginine occurs at positions 310 and 320.

As to quaternary structure, oligomerization is required for binding to microtubules.

The protein localises to the cytoplasm. The protein resides in the cytoskeleton. It localises to the microtubule organizing center. Its subcellular location is the centrosome. It is found in the nucleus. The protein localises to the cleavage furrow. In terms of biological role, may be involved in microtubule organization and stabilization. In Mus musculus (Mouse), this protein is Fibronectin type III and SPRY domain-containing protein 1 (Fsd1).